Reading from the N-terminus, the 121-residue chain is Large ribosomal subunit protein bL20 (121 aa).

It belongs to the bacterial ribosomal protein bL20 family.

Its function is as follows. Binds directly to 23S ribosomal RNA and is necessary for the in vitro assembly process of the 50S ribosomal subunit. It is not involved in the protein synthesizing functions of that subunit. The polypeptide is Large ribosomal subunit protein bL20 (Beijerinckia indica subsp. indica (strain ATCC 9039 / DSM 1715 / NCIMB 8712)).